The sequence spans 457 residues: L-lysine-epsilon aminotransferase (457 aa).

Pyridoxal 5'-phosphate is bound by residues G131 and A132. 2-oxoglutarate contacts are provided by R172 and Q278. R172 is an L-lysine binding site. Residue Q278 coordinates pyridoxal 5'-phosphate. N6-(pyridoxal phosphate)lysine is present on K304. Residue R427 participates in 2-oxoglutarate binding.

It belongs to the class-III pyridoxal-phosphate-dependent aminotransferase family. In terms of assembly, monomer. Pyridoxal 5'-phosphate is required as a cofactor.

It carries out the reaction L-lysine + 2-oxoglutarate = (S)-2-amino-6-oxohexanoate + L-glutamate. The protein operates within antibiotic biosynthesis; cephamycin C biosynthesis. With respect to regulation, activity is induced in the presence of high concentrations of lysine, but not by L-alpha-aminoadipic acid. Not repressed by ammonium ions. Its function is as follows. Catalyzes the transfer of the terminal amino group of L-lysine to alpha-ketoglutarate to yield L-glutamate and 2-aminoadipate 6-semialdehyde ((S)-2-amino-6-oxohexanoate), which is spontaneously converted to the dehydrated form 1-piperideine 6-carboxylate. Shows a high specificity for L-lysine as substrate although L-ornithine can also be used, leading to the formation of an o-aminobenzaldehyde reactive compound. Only cis-oxaloacetate and pyruvate can replace alpha-ketoglutarate, but with very low efficiency. In Streptomyces clavuligerus, this protein is L-lysine-epsilon aminotransferase.